Here is a 195-residue protein sequence, read N- to C-terminus: Putative EGF-like and EMI domain-containing protein 1 (195 aa).

In terms of domain architecture, EGF-like spans Cys86–Cys97.

The chain is Putative EGF-like and EMI domain-containing protein 1 (EGFEM1P) from Homo sapiens (Human).